Reading from the N-terminus, the 329-residue chain is Putative ubiquitin thioesterase otu1 (329 aa).

The UBX-like stretch occupies residues arginine 7–alanine 89. The disordered stretch occupies residues threonine 85–tyrosine 127. The segment covering serine 115 to aspartate 124 has biased composition (polar residues). Residues isoleucine 135–alanine 254 enclose the OTU domain. Residues methionine 140–cysteine 146 form a cys-loop region. Residue aspartate 143 is part of the active site. Cysteine 146 functions as the Nucleophile in the catalytic mechanism. The tract at residues isoleucine 193–isoleucine 203 is variable-loop. The tract at residues tyrosine 243–histidine 247 is his-loop. Residue isoleucine 246 coordinates substrate. Histidine 247 is an active-site residue. Positions valine 272–tyrosine 277 are S2 site. The segment at isoleucine 299–histidine 323 adopts a C2H2-type zinc-finger fold. Histidine 323 is an active-site residue.

The protein resides in the cytoplasm. Its subcellular location is the nucleus. It catalyses the reaction Thiol-dependent hydrolysis of ester, thioester, amide, peptide and isopeptide bonds formed by the C-terminal Gly of ubiquitin (a 76-residue protein attached to proteins as an intracellular targeting signal).. Functionally, hydrolase that can remove conjugated ubiquitin from proteins and may therefore play an important regulatory role at the level of protein turnover by preventing degradation. Has a role in meiosis. The sequence is that of Putative ubiquitin thioesterase otu1 (otu1) from Schizosaccharomyces pombe (strain 972 / ATCC 24843) (Fission yeast).